The chain runs to 242 residues: 1-(5-phosphoribosyl)-5-[(5-phosphoribosylamino)methylideneamino] imidazole-4-carboxamide isomerase (242 aa).

Residue Asp-8 is the Proton acceptor of the active site. Residue Asp-129 is the Proton donor of the active site.

This sequence belongs to the HisA/HisF family.

The protein localises to the cytoplasm. The catalysed reaction is 1-(5-phospho-beta-D-ribosyl)-5-[(5-phospho-beta-D-ribosylamino)methylideneamino]imidazole-4-carboxamide = 5-[(5-phospho-1-deoxy-D-ribulos-1-ylimino)methylamino]-1-(5-phospho-beta-D-ribosyl)imidazole-4-carboxamide. The protein operates within amino-acid biosynthesis; L-histidine biosynthesis; L-histidine from 5-phospho-alpha-D-ribose 1-diphosphate: step 4/9. The sequence is that of 1-(5-phosphoribosyl)-5-[(5-phosphoribosylamino)methylideneamino] imidazole-4-carboxamide isomerase from Beijerinckia indica subsp. indica (strain ATCC 9039 / DSM 1715 / NCIMB 8712).